A 425-amino-acid polypeptide reads, in one-letter code: 3-isopropylmalate dehydratase large subunit (425 aa).

Residues cysteine 306, cysteine 366, and cysteine 369 each contribute to the [4Fe-4S] cluster site.

The protein belongs to the aconitase/IPM isomerase family. LeuC type 2 subfamily. Heterodimer of LeuC and LeuD. It depends on [4Fe-4S] cluster as a cofactor.

The catalysed reaction is (2R,3S)-3-isopropylmalate = (2S)-2-isopropylmalate. The protein operates within amino-acid biosynthesis; L-leucine biosynthesis; L-leucine from 3-methyl-2-oxobutanoate: step 2/4. Its function is as follows. Catalyzes the isomerization between 2-isopropylmalate and 3-isopropylmalate, via the formation of 2-isopropylmaleate. The sequence is that of 3-isopropylmalate dehydratase large subunit from Nautilia profundicola (strain ATCC BAA-1463 / DSM 18972 / AmH).